We begin with the raw amino-acid sequence, 311 residues long: Aspartate carbamoyltransferase catalytic subunit (311 aa).

Carbamoyl phosphate contacts are provided by Arg-55 and Thr-56. An L-aspartate-binding site is contributed by Lys-85. Residues Arg-106, His-134, and Gln-137 each contribute to the carbamoyl phosphate site. L-aspartate-binding residues include Arg-167 and Arg-228. Leu-266 and Pro-267 together coordinate carbamoyl phosphate.

It belongs to the aspartate/ornithine carbamoyltransferase superfamily. ATCase family. As to quaternary structure, heterododecamer (2C3:3R2) of six catalytic PyrB chains organized as two trimers (C3), and six regulatory PyrI chains organized as three dimers (R2).

The enzyme catalyses carbamoyl phosphate + L-aspartate = N-carbamoyl-L-aspartate + phosphate + H(+). Its pathway is pyrimidine metabolism; UMP biosynthesis via de novo pathway; (S)-dihydroorotate from bicarbonate: step 2/3. Catalyzes the condensation of carbamoyl phosphate and aspartate to form carbamoyl aspartate and inorganic phosphate, the committed step in the de novo pyrimidine nucleotide biosynthesis pathway. The protein is Aspartate carbamoyltransferase catalytic subunit of Psychromonas ingrahamii (strain DSM 17664 / CCUG 51855 / 37).